The chain runs to 93 residues: CRISPR-associated endoribonuclease Cas2 1 (93 aa).

Residue Asp-8 participates in Mg(2+) binding.

It belongs to the CRISPR-associated endoribonuclease Cas2 protein family. Homodimer, forms a heterotetramer with a Cas1 homodimer. Mg(2+) is required as a cofactor.

CRISPR (clustered regularly interspaced short palindromic repeat), is an adaptive immune system that provides protection against mobile genetic elements (viruses, transposable elements and conjugative plasmids). CRISPR clusters contain sequences complementary to antecedent mobile elements and target invading nucleic acids. CRISPR clusters are transcribed and processed into CRISPR RNA (crRNA). Functions as a ssRNA-specific endoribonuclease. Involved in the integration of spacer DNA into the CRISPR cassette. The sequence is that of CRISPR-associated endoribonuclease Cas2 1 from Chloroflexus aurantiacus (strain ATCC 29366 / DSM 635 / J-10-fl).